We begin with the raw amino-acid sequence, 236 residues long: Leucyl/phenylalanyl-tRNA--protein transferase (236 aa).

The segment covering methionine 1 to serine 13 has biased composition (polar residues). The tract at residues methionine 1–serine 22 is disordered.

This sequence belongs to the L/F-transferase family.

The protein resides in the cytoplasm. The enzyme catalyses N-terminal L-lysyl-[protein] + L-leucyl-tRNA(Leu) = N-terminal L-leucyl-L-lysyl-[protein] + tRNA(Leu) + H(+). It catalyses the reaction N-terminal L-arginyl-[protein] + L-leucyl-tRNA(Leu) = N-terminal L-leucyl-L-arginyl-[protein] + tRNA(Leu) + H(+). It carries out the reaction L-phenylalanyl-tRNA(Phe) + an N-terminal L-alpha-aminoacyl-[protein] = an N-terminal L-phenylalanyl-L-alpha-aminoacyl-[protein] + tRNA(Phe). Functionally, functions in the N-end rule pathway of protein degradation where it conjugates Leu, Phe and, less efficiently, Met from aminoacyl-tRNAs to the N-termini of proteins containing an N-terminal arginine or lysine. The chain is Leucyl/phenylalanyl-tRNA--protein transferase from Shewanella piezotolerans (strain WP3 / JCM 13877).